Reading from the N-terminus, the 252-residue chain is Large ribosomal subunit protein uL29m (252 aa).

A mitochondrion-targeting transit peptide spans 1-39; sequence MSTSTVIRPVARSLLQLRKAGNTPPAFLLPCLQSSSTTS. Residues 233 to 242 show a composition bias toward acidic residues; the sequence is EDVLAEAEGE. The disordered stretch occupies residues 233–252; it reads EDVLAEAEGEAEPKPAQVTA.

It belongs to the universal ribosomal protein uL29 family. Component of the mitochondrial large ribosomal subunit. Mature mitochondrial ribosomes consist of a small (37S) and a large (54S) subunit. The 37S subunit contains at least 33 different proteins and 1 molecule of RNA (15S). The 54S subunit contains at least 45 different proteins and 1 molecule of RNA (21S).

The protein localises to the mitochondrion. The chain is Large ribosomal subunit protein uL29m (mrpl4) from Botryotinia fuckeliana (strain B05.10) (Noble rot fungus).